Here is a 307-residue protein sequence, read N- to C-terminus: tRNA dimethylallyltransferase 2 (307 aa).

11 to 18 (GPTASGKT) is a binding site for ATP. 13-18 (TASGKT) is a substrate binding site. The interaction with substrate tRNA stretch occupies residues 36–39 (DSRQ).

This sequence belongs to the IPP transferase family. In terms of assembly, monomer. It depends on Mg(2+) as a cofactor.

It catalyses the reaction adenosine(37) in tRNA + dimethylallyl diphosphate = N(6)-dimethylallyladenosine(37) in tRNA + diphosphate. Catalyzes the transfer of a dimethylallyl group onto the adenine at position 37 in tRNAs that read codons beginning with uridine, leading to the formation of N6-(dimethylallyl)adenosine (i(6)A). The polypeptide is tRNA dimethylallyltransferase 2 (Phocaeicola vulgatus (strain ATCC 8482 / DSM 1447 / JCM 5826 / CCUG 4940 / NBRC 14291 / NCTC 11154) (Bacteroides vulgatus)).